The chain runs to 264 residues: uncharacterized protein (264 aa).

An N-terminal signal peptide occupies residues 1 to 22 (MGYLKKLALFISVIILGIFIIG). The N-palmitoyl cysteine moiety is linked to residue cysteine 23. A lipid anchor (S-diacylglycerol cysteine) is attached at cysteine 23.

It belongs to the staphylococcal tandem lipoprotein family.

The protein resides in the cell membrane. This is an uncharacterized protein from Staphylococcus aureus (strain N315).